We begin with the raw amino-acid sequence, 330 residues long: Phosphate acyltransferase (330 aa).

The protein belongs to the PlsX family. In terms of assembly, homodimer. Probably interacts with PlsY.

Its subcellular location is the cytoplasm. It carries out the reaction a fatty acyl-[ACP] + phosphate = an acyl phosphate + holo-[ACP]. It participates in lipid metabolism; phospholipid metabolism. Its function is as follows. Catalyzes the reversible formation of acyl-phosphate (acyl-PO(4)) from acyl-[acyl-carrier-protein] (acyl-ACP). This enzyme utilizes acyl-ACP as fatty acyl donor, but not acyl-CoA. The sequence is that of Phosphate acyltransferase from Bacillus mycoides (strain KBAB4) (Bacillus weihenstephanensis).